We begin with the raw amino-acid sequence, 156 residues long: Large ribosomal subunit protein uL22c (156 aa).

The protein belongs to the universal ribosomal protein uL22 family. As to quaternary structure, part of the 50S ribosomal subunit.

The protein localises to the plastid. Its subcellular location is the chloroplast. Its function is as follows. This protein binds specifically to 23S rRNA. The globular domain of the protein is located near the polypeptide exit tunnel on the outside of the subunit, while an extended beta-hairpin is found that lines the wall of the exit tunnel in the center of the 70S ribosome. This is Large ribosomal subunit protein uL22c (rpl22) from Buxus microphylla (Littleleaf boxwood).